A 337-amino-acid polypeptide reads, in one-letter code: tRNA N6-adenosine threonylcarbamoyltransferase (337 aa).

Residues histidine 111 and histidine 115 each contribute to the Fe cation site. Substrate is bound by residues 134-138 (LVSGG), aspartate 167, glycine 180, and asparagine 272. Residue aspartate 300 coordinates Fe cation.

Belongs to the KAE1 / TsaD family. Requires Fe(2+) as cofactor.

Its subcellular location is the cytoplasm. The enzyme catalyses L-threonylcarbamoyladenylate + adenosine(37) in tRNA = N(6)-L-threonylcarbamoyladenosine(37) in tRNA + AMP + H(+). Required for the formation of a threonylcarbamoyl group on adenosine at position 37 (t(6)A37) in tRNAs that read codons beginning with adenine. Is involved in the transfer of the threonylcarbamoyl moiety of threonylcarbamoyl-AMP (TC-AMP) to the N6 group of A37, together with TsaE and TsaB. TsaD likely plays a direct catalytic role in this reaction. The protein is tRNA N6-adenosine threonylcarbamoyltransferase of Salmonella newport (strain SL254).